Reading from the N-terminus, the 362-residue chain is Dihydroorotate dehydrogenase (quinone) (362 aa).

FMN is bound by residues 62-66 (AGYDK) and Thr86. Position 66 (Lys66) interacts with substrate. 111 to 115 (NRLGF) serves as a coordination point for substrate. FMN contacts are provided by Asn139 and Asn170. Substrate is bound at residue Asn170. Ser173 (nucleophile) is an active-site residue. Asn175 contacts substrate. Positions 215 and 243 each coordinate FMN. Substrate is bound at residue 244-245 (NT). Residues Gly266, Gly295, and 316–317 (YS) each bind FMN.

The protein belongs to the dihydroorotate dehydrogenase family. Type 2 subfamily. Monomer. FMN is required as a cofactor.

It localises to the cell membrane. The catalysed reaction is (S)-dihydroorotate + a quinone = orotate + a quinol. It participates in pyrimidine metabolism; UMP biosynthesis via de novo pathway; orotate from (S)-dihydroorotate (quinone route): step 1/1. Catalyzes the conversion of dihydroorotate to orotate with quinone as electron acceptor. This chain is Dihydroorotate dehydrogenase (quinone), found in Rhizobium rhizogenes (strain K84 / ATCC BAA-868) (Agrobacterium radiobacter).